The primary structure comprises 54 residues: Defensin-like protein 1 (54 aa).

Cystine bridges form between cysteine 6–cysteine 54, cysteine 17–cysteine 39, cysteine 23–cysteine 48, and cysteine 27–cysteine 50.

The protein belongs to the DEFL family.

It localises to the secreted. Possesses antifungal activity insensitive to inorganic cations. Causes germ tubes and hyphae to swell and form multiple hyphal buds. Binds to the plasma membrane of the fungus. Has no inhibitory effect on insect gut alpha-amylase. In Heuchera sanguinea (Coralbells), this protein is Defensin-like protein 1.